A 302-amino-acid chain; its full sequence is ATP synthase subunit a (302 aa).

7 helical membrane passes run 61–81 (VDSL…FWLG), 119–139 (IAPL…MDLI), 148–168 (FEWV…FKIV), 172–192 (DPNI…FLTI), 214–234 (PVVK…ALLA), 252–272 (FVFI…AWPW), and 273–293 (AVFH…LTIV).

Belongs to the ATPase A chain family. F-type ATPases have 2 components, CF(1) - the catalytic core - and CF(0) - the membrane proton channel. CF(1) has five subunits: alpha(3), beta(3), gamma(1), delta(1), epsilon(1). CF(0) has three main subunits: a(1), b(2) and c(9-12). The alpha and beta chains form an alternating ring which encloses part of the gamma chain. CF(1) is attached to CF(0) by a central stalk formed by the gamma and epsilon chains, while a peripheral stalk is formed by the delta and b chains.

Its subcellular location is the cell inner membrane. Its function is as follows. Key component of the proton channel; it plays a direct role in the translocation of protons across the membrane. This chain is ATP synthase subunit a, found in Alcanivorax borkumensis (strain ATCC 700651 / DSM 11573 / NCIMB 13689 / SK2).